Here is a 505-residue protein sequence, read N- to C-terminus: Mannosyl-oligosaccharide alpha-1,2-mannosidase 1B (505 aa).

Residues 1–16 (MRTLLALAALAGFAAA) form the signal peptide. N-linked (GlcNAc...) asparagine glycosylation is found at asparagine 88 and asparagine 174. Cysteine 325 and cysteine 354 form a disulfide bridge. N-linked (GlcNAc...) asparagine glycosylation occurs at asparagine 359. The active-site Proton donor is glutamate 368. Residue threonine 494 coordinates Ca(2+).

This sequence belongs to the glycosyl hydrolase 47 family. Monomer. The cofactor is Ca(2+). It depends on Mg(2+) as a cofactor.

It localises to the cytoplasmic vesicle lumen. It carries out the reaction N(4)-(alpha-D-Man-(1-&gt;2)-alpha-D-Man-(1-&gt;2)-alpha-D-Man-(1-&gt;3)-[alpha-D-Man-(1-&gt;2)-alpha-D-Man-(1-&gt;3)-[alpha-D-Man-(1-&gt;2)-alpha-D-Man-(1-&gt;6)]-alpha-D-Man-(1-&gt;6)]-beta-D-Man-(1-&gt;4)-beta-D-GlcNAc-(1-&gt;4)-beta-D-GlcNAc)-L-asparaginyl-[protein] (N-glucan mannose isomer 9A1,2,3B1,2,3) + 4 H2O = N(4)-(alpha-D-Man-(1-&gt;3)-[alpha-D-Man-(1-&gt;3)-[alpha-D-Man-(1-&gt;6)]-alpha-D-Man-(1-&gt;6)]-beta-D-Man-(1-&gt;4)-beta-D-GlcNAc-(1-&gt;4)-beta-D-GlcNAc)-L-asparaginyl-[protein] (N-glucan mannose isomer 5A1,2) + 4 beta-D-mannose. It catalyses the reaction N(4)-(alpha-D-Man-(1-&gt;2)-alpha-D-Man-(1-&gt;2)-alpha-D-Man-(1-&gt;3)-[alpha-D-Man-(1-&gt;3)-[alpha-D-Man-(1-&gt;2)-alpha-D-Man-(1-&gt;6)]-alpha-D-Man-(1-&gt;6)]-beta-D-Man-(1-&gt;4)-beta-D-GlcNAc-(1-&gt;4)-beta-D-GlcNAc)-L-asparaginyl-[protein] (N-glucan mannose isomer 8A1,2,3B1,3) + 3 H2O = N(4)-(alpha-D-Man-(1-&gt;3)-[alpha-D-Man-(1-&gt;3)-[alpha-D-Man-(1-&gt;6)]-alpha-D-Man-(1-&gt;6)]-beta-D-Man-(1-&gt;4)-beta-D-GlcNAc-(1-&gt;4)-beta-D-GlcNAc)-L-asparaginyl-[protein] (N-glucan mannose isomer 5A1,2) + 3 beta-D-mannose. It participates in protein modification; protein glycosylation. Functionally, involved in the maturation of Asn-linked oligosaccharides. Progressively trims alpha-1,2-linked mannose residues from Man(9)GlcNAc(2) to produce Man(5)GlcNAc(2). The polypeptide is Mannosyl-oligosaccharide alpha-1,2-mannosidase 1B (mns1B) (Emericella nidulans (strain FGSC A4 / ATCC 38163 / CBS 112.46 / NRRL 194 / M139) (Aspergillus nidulans)).